Consider the following 260-residue polypeptide: Late transcription factor 1 (260 aa).

It belongs to the chordopoxvirinae VLTF-1 family. In terms of assembly, interacts with the late transcription factors VLTF-2 and VLTF-3. Interacts with the late transcription elongation factor VLTF-4. Interacts with itself.

In terms of biological role, associates with RNA polymerase to initiate transcription from late gene promoters. This Homo sapiens (Human) protein is Late transcription factor 1 (OPG093).